The following is a 504-amino-acid chain: Histidine ammonia-lyase (504 aa).

A cross-link (5-imidazolinone (Ala-Gly)) is located at residues 142–144; that stretch reads ASG. 2,3-didehydroalanine (Ser) is present on Ser143.

This sequence belongs to the PAL/histidase family. Contains an active site 4-methylidene-imidazol-5-one (MIO), which is formed autocatalytically by cyclization and dehydration of residues Ala-Ser-Gly.

It is found in the cytoplasm. The catalysed reaction is L-histidine = trans-urocanate + NH4(+). It participates in amino-acid degradation; L-histidine degradation into L-glutamate; N-formimidoyl-L-glutamate from L-histidine: step 1/3. The polypeptide is Histidine ammonia-lyase (Staphylococcus aureus (strain MSSA476)).